The chain runs to 158 residues: Endoribonuclease YbeY (158 aa).

3 residues coordinate Zn(2+): H117, H121, and H127.

This sequence belongs to the endoribonuclease YbeY family. It depends on Zn(2+) as a cofactor.

The protein localises to the cytoplasm. In terms of biological role, single strand-specific metallo-endoribonuclease involved in late-stage 70S ribosome quality control and in maturation of the 3' terminus of the 16S rRNA. The polypeptide is Endoribonuclease YbeY (Francisella philomiragia subsp. philomiragia (strain ATCC 25017 / CCUG 19701 / FSC 153 / O#319-036)).